Reading from the N-terminus, the 532-residue chain is Aspartate--tRNA ligase 1, cytoplasmic (532 aa).

Residues 7–41 (LEECGEKISKKESKKRAAKLEKLLRKQEREEATSS) adopt a coiled-coil conformation. The disordered stretch occupies residues 31-58 (RKQEREEATSSSLSLEEEDESCSSNYGD). The segment at residues 88 to 169 (VSIRGRLHKN…QVEIHVRKMY (82 aa)) is a DNA-binding region (OB). Glu260 contributes to the L-aspartate binding site. Positions 282-285 (QLHK) are aspartate. Arg304 contributes to the L-aspartate binding site. ATP-binding positions include 304–306 (RAE), 312–314 (RHL), and Glu455. Mg(2+) is bound by residues Glu455 and Ser458. L-aspartate is bound by residues Ser458 and Arg462. 503 to 506 (GLER) lines the ATP pocket.

Belongs to the class-II aminoacyl-tRNA synthetase family. Type 2 subfamily.

The protein localises to the cytoplasm. The protein resides in the cytosol. It catalyses the reaction tRNA(Asp) + L-aspartate + ATP = L-aspartyl-tRNA(Asp) + AMP + diphosphate. Catalyzes the specific attachment of an amino acid to its cognate tRNA in a 2 step reaction: the amino acid (AA) is first activated by ATP to form AA-AMP and then transferred to the acceptor end of the tRNA. The protein is Aspartate--tRNA ligase 1, cytoplasmic of Arabidopsis thaliana (Mouse-ear cress).